We begin with the raw amino-acid sequence, 110 residues long: UPF0122 protein lwe1821 (110 aa).

The protein belongs to the UPF0122 family.

Its function is as follows. Might take part in the signal recognition particle (SRP) pathway. This is inferred from the conservation of its genetic proximity to ftsY/ffh. May be a regulatory protein. This is UPF0122 protein lwe1821 from Listeria welshimeri serovar 6b (strain ATCC 35897 / DSM 20650 / CCUG 15529 / CIP 8149 / NCTC 11857 / SLCC 5334 / V8).